The chain runs to 243 residues: 1-(5-phosphoribosyl)-5-[(5-phosphoribosylamino)methylideneamino] imidazole-4-carboxamide isomerase (243 aa).

Asp-8 (proton acceptor) is an active-site residue. The active-site Proton donor is the Asp-130.

It belongs to the HisA/HisF family.

Its subcellular location is the cytoplasm. The catalysed reaction is 1-(5-phospho-beta-D-ribosyl)-5-[(5-phospho-beta-D-ribosylamino)methylideneamino]imidazole-4-carboxamide = 5-[(5-phospho-1-deoxy-D-ribulos-1-ylimino)methylamino]-1-(5-phospho-beta-D-ribosyl)imidazole-4-carboxamide. It functions in the pathway amino-acid biosynthesis; L-histidine biosynthesis; L-histidine from 5-phospho-alpha-D-ribose 1-diphosphate: step 4/9. This Acinetobacter baumannii (strain AB307-0294) protein is 1-(5-phosphoribosyl)-5-[(5-phosphoribosylamino)methylideneamino] imidazole-4-carboxamide isomerase.